Reading from the N-terminus, the 367-residue chain is Alanine racemase (367 aa).

Residue Lys40 is the Proton acceptor; specific for D-alanine of the active site. Lys40 bears the N6-(pyridoxal phosphate)lysine mark. A substrate-binding site is contributed by Arg136. Catalysis depends on Tyr263, which acts as the Proton acceptor; specific for L-alanine. A substrate-binding site is contributed by Met310.

The protein belongs to the alanine racemase family. Pyridoxal 5'-phosphate serves as cofactor.

It catalyses the reaction L-alanine = D-alanine. Its pathway is amino-acid biosynthesis; D-alanine biosynthesis; D-alanine from L-alanine: step 1/1. In terms of biological role, catalyzes the interconversion of L-alanine and D-alanine. May also act on other amino acids. This chain is Alanine racemase (alr), found in Streptococcus thermophilus (strain ATCC BAA-250 / LMG 18311).